The primary structure comprises 505 residues: Trans-cinnamate 4-monooxygenase (505 aa).

A helical transmembrane segment spans residues 3 to 23; that stretch reads LLLIEKTLVALFAAIIGAILI. (E)-cinnamate is bound by residues 213–218 and A306; that span reads RSRLAQ. C447 contacts heme.

This sequence belongs to the cytochrome P450 family. It depends on heme as a cofactor.

The protein resides in the membrane. It catalyses the reaction (E)-cinnamate + reduced [NADPH--hemoprotein reductase] + O2 = (E)-4-coumarate + oxidized [NADPH--hemoprotein reductase] + H2O + H(+). It participates in phenylpropanoid metabolism; trans-4-coumarate biosynthesis; trans-4-coumarate from trans-cinnamate: step 1/1. With respect to regulation, inactivated by piperonylic acid. Catalyzes the first oxidative step of the phenylpropanoid pathway in higher plants by transforming trans-cinnamate into p-coumarate. The compounds formed by this pathway are essential components for lignification, pollination, and defense against ultraviolet light, predators and pathogens. Can also use 2-naphthoic acid as substrate. In Helianthus tuberosus (Jerusalem artichoke), this protein is Trans-cinnamate 4-monooxygenase.